Consider the following 1053-residue polypeptide: uncharacterized protein (1053 aa).

The protein belongs to the mycobacterial PPE family.

This is an uncharacterized protein from Mycobacterium tuberculosis (strain ATCC 25618 / H37Rv).